The chain runs to 320 residues: Protein HEXIM1 (320 aa).

The tract at residues 1–124 (MAEPLLSEFQ…RRRPSKKKRL (124 aa)) is disordered. A compositionally biased stretch (polar residues) spans 9-19 (FQHQPQTSNCT). Basic and acidic residues predominate over residues 24-47 (VHEERNPDRPPGAEERVPEEDSRW). At Ser-98 the chain carries Phosphoserine. Residues 109-124 (VGKKKHRRRPSKKKRL) show a composition bias toward basic residues. Residues 111–138 (KKKHRRRPSKKKRLWKPYYTLTWEEKKK) are basic region; mediates nuclear localization and interaction with 7SK snRNA and NR3C1. The segment at 163–166 (PYNT) is interaction with P-TEFb. An autoinhibitory acidic region; in absence of 7SK snRNA interacts with the basic region preventing interaction with P-TEFb and modulating subcellular localization region spans residues 171–211 (MDDHDQEEPDLKTGLYPKRAAAKSDDTSDEDFMEEAGEEDG). Residues 174 to 223 (HDQEEPDLKTGLYPKRAAAKSDDTSDEDFMEEAGEEDGGSDGMGGDGSEF) form a disordered region. The residue at position 194 (Ser-194) is a Phosphoserine. Position 197 is a phosphothreonine (Thr-197). The span at 197–212 (TSDEDFMEEAGEEDGG) shows a compositional bias: acidic residues. Phosphoserine occurs at positions 198, 213, and 221. Residues 244–310 (SKQELIKEYL…LTENELHRQQ (67 aa)) adopt a coiled-coil conformation. The tract at residues 247-275 (ELIKEYLELEKCLSRMEDENNRLRLESQR) is mediates interaction with CCNT1. Residues 271-316 (LESQRLDGDDARVRELELELDRLRAENLQLLTENELHRQQERAPLS) form a required for inhibition of ESR1-dependent transcription region.

This sequence belongs to the HEXIM family. As to quaternary structure, homooligomer and heterooligomer with HEXIM2; probably dimeric. Core component of the 7SK RNP complex, at least composed of 7SK RNA, LARP7, MEPCE, HEXIM1 (or HEXIM2) and P-TEFb (composed of CDK9 and CCNT1/cyclin-T1). Interacts with the N-CoR complex through NCOR1. Interacts with ESR1 and NR3C1. May interact with NF-kappa-B through RELA. Interacts with CCNT2; mediates formation of a tripartite complex with KPNA2. Part of the HDP-RNP complex composed of at least HEXIM1, PRKDC, XRCC5, XRCC6, paraspeckle proteins (SFPQ, NONO, PSPC1, RBM14, and MATR3) and NEAT1 non-coding RNA.

It is found in the nucleus. The protein localises to the cytoplasm. Its function is as follows. Transcriptional regulator which functions as a general RNA polymerase II transcription inhibitor. Core component of the 7SK RNP complex: in cooperation with 7SK snRNA sequesters P-TEFb in a large inactive 7SK snRNP complex preventing RNA polymerase II phosphorylation and subsequent transcriptional elongation. May also regulate NF-kappa-B, ESR1, NR3C1 and CIITA-dependent transcriptional activity. Plays a role in the regulation of DNA virus-mediated innate immune response by assembling into the HDP-RNP complex, a complex that serves as a platform for IRF3 phosphorylation and subsequent innate immune response activation through the cGAS-STING pathway. In Bos taurus (Bovine), this protein is Protein HEXIM1 (HEXIM1).